The chain runs to 349 residues: Isopentenyl-diphosphate delta-isomerase (349 aa).

Residue 9–10 (RK) participates in substrate binding. Residues 65–67 (AMT), Ser-95, and Asn-124 each bind FMN. Residue 95–97 (STH) participates in substrate binding. Residue Gln-154 participates in substrate binding. Glu-155 contributes to the Mg(2+) binding site. Residues Lys-186, Ser-211, Thr-216, 262-264 (GVR), and 283-284 (SR) contribute to the FMN site.

It belongs to the IPP isomerase type 2 family. As to quaternary structure, homooctamer. Dimer of tetramers. Requires FMN as cofactor. It depends on NADPH as a cofactor. Mg(2+) serves as cofactor.

Its subcellular location is the cytoplasm. The enzyme catalyses isopentenyl diphosphate = dimethylallyl diphosphate. Functionally, involved in the biosynthesis of isoprenoids. Catalyzes the 1,3-allylic rearrangement of the homoallylic substrate isopentenyl (IPP) to its allylic isomer, dimethylallyl diphosphate (DMAPP). This Staphylococcus haemolyticus (strain JCSC1435) protein is Isopentenyl-diphosphate delta-isomerase.